A 391-amino-acid polypeptide reads, in one-letter code: Chaperone protein DnaJ (391 aa).

The 66-residue stretch at 6 to 71 folds into the J domain; that stretch reads CYYEVLKVER…NKRARYDQYG (66 aa). A CR-type zinc finger spans residues 137 to 215; it reads GCHKDIVFRR…CRGTGTQNEK (79 aa). Residues Cys-150, Cys-153, Cys-167, Cys-170, Cys-189, Cys-192, Cys-203, and Cys-206 each coordinate Zn(2+). CXXCXGXG motif repeat units lie at residues 150–157, 167–174, 189–196, and 203–210; these read CDTCDGSG, CTMCGGQG, CPTCKGAG, and CGKCRGTG. A disordered region spans residues 372-391; sequence FFDPEPEEAGTGSTDTEKDS.

The protein belongs to the DnaJ family. Homodimer. Requires Zn(2+) as cofactor.

Its subcellular location is the cytoplasm. Participates actively in the response to hyperosmotic and heat shock by preventing the aggregation of stress-denatured proteins and by disaggregating proteins, also in an autonomous, DnaK-independent fashion. Unfolded proteins bind initially to DnaJ; upon interaction with the DnaJ-bound protein, DnaK hydrolyzes its bound ATP, resulting in the formation of a stable complex. GrpE releases ADP from DnaK; ATP binding to DnaK triggers the release of the substrate protein, thus completing the reaction cycle. Several rounds of ATP-dependent interactions between DnaJ, DnaK and GrpE are required for fully efficient folding. Also involved, together with DnaK and GrpE, in the DNA replication of plasmids through activation of initiation proteins. This chain is Chaperone protein DnaJ, found in Rhodopirellula baltica (strain DSM 10527 / NCIMB 13988 / SH1).